A 210-amino-acid polypeptide reads, in one-letter code: MYRIKDEWGEFLVRLARRAIEEYLRTGREIEPPKDIPPELWEKMGVFVTLNRHNVPPQAALRGCIGFPLPIYPLVKATIKAAIYAAVDDPRFPPVKLEEMNNIVVEVSVLTPPELIEGPPEERPKKIKVGRDGLIVEKGIYTGLLLPQVAVEWGWDEEEFLAETCWKAGLPPDCWLDEDTKVYKFTAEIFEEEYPRGPVKRKPLIPQSQD.

One can recognise an AMMECR1 domain in the interval 7–201 (EWGEFLVRLA…EEYPRGPVKR (195 aa)).

The protein is Protein PF1979 of Pyrococcus furiosus (strain ATCC 43587 / DSM 3638 / JCM 8422 / Vc1).